A 314-amino-acid chain; its full sequence is uncharacterized protein (314 aa).

2 consecutive transmembrane segments (helical) span residues 23 to 43 (LALG…MALF) and 98 to 118 (MASG…GPLT). The span at 165–184 (GLGSGAGGGDVGGGGAGGTT) shows a compositional bias: gly residues. Positions 165 to 314 (GLGSGAGGGD…APDEKTDAGE (150 aa)) are disordered. The segment covering 190-202 (GPPPVPTSSPPTT) has biased composition (pro residues). Low complexity-rich tracts occupy residues 203 to 212 (PAGAPTKSAT) and 219 to 232 (ASPA…AGMP). A helical transmembrane segment spans residues 221-241 (PASAHMGAAGMPMVPPGAMGA). Over residues 294–314 (LLPEHKDFGRIAPDEKTDAGE) the composition is skewed to basic and acidic residues.

It is found in the cell membrane. This is an uncharacterized protein from Mycobacterium tuberculosis (strain CDC 1551 / Oshkosh).